Reading from the N-terminus, the 317-residue chain is Putative HTH-type transcriptional regulatory protein NP_1320A (317 aa).

The 58-residue stretch at 132–189 (LSDIRSQEDMSLGKLANELGVSRRTVSKYEDGMSASVEVAAELEEIFDRKLASPVEVL) folds into the HTH cro/C1-type domain. Positions 143–162 (LGKLANELGVSRRTVSKYED) form a DNA-binding region, H-T-H motif.

The sequence is that of Putative HTH-type transcriptional regulatory protein NP_1320A from Natronomonas pharaonis (strain ATCC 35678 / DSM 2160 / CIP 103997 / JCM 8858 / NBRC 14720 / NCIMB 2260 / Gabara) (Halobacterium pharaonis).